A 174-amino-acid polypeptide reads, in one-letter code: Protein GrpE (174 aa).

This sequence belongs to the GrpE family. As to quaternary structure, homodimer.

The protein localises to the cytoplasm. Functionally, participates actively in the response to hyperosmotic and heat shock by preventing the aggregation of stress-denatured proteins, in association with DnaK and GrpE. It is the nucleotide exchange factor for DnaK and may function as a thermosensor. Unfolded proteins bind initially to DnaJ; upon interaction with the DnaJ-bound protein, DnaK hydrolyzes its bound ATP, resulting in the formation of a stable complex. GrpE releases ADP from DnaK; ATP binding to DnaK triggers the release of the substrate protein, thus completing the reaction cycle. Several rounds of ATP-dependent interactions between DnaJ, DnaK and GrpE are required for fully efficient folding. The sequence is that of Protein GrpE from Pseudothermotoga lettingae (strain ATCC BAA-301 / DSM 14385 / NBRC 107922 / TMO) (Thermotoga lettingae).